Reading from the N-terminus, the 219-residue chain is Large ribosomal subunit protein uL3 (219 aa).

The protein belongs to the universal ribosomal protein uL3 family. Part of the 50S ribosomal subunit. Forms a cluster with proteins L14 and L19.

In terms of biological role, one of the primary rRNA binding proteins, it binds directly near the 3'-end of the 23S rRNA, where it nucleates assembly of the 50S subunit. This chain is Large ribosomal subunit protein uL3, found in Chlamydia pneumoniae (Chlamydophila pneumoniae).